An 81-amino-acid chain; its full sequence is Protein translocase subunit SecE (81 aa).

Residues 50 to 70 (VAVILMVILVSTVIYFVDQIF) traverse the membrane as a helical segment.

It belongs to the SecE/SEC61-gamma family. In terms of assembly, component of the Sec protein translocase complex. Heterotrimer consisting of SecY, SecE and SecG subunits. The heterotrimers can form oligomers, although 1 heterotrimer is thought to be able to translocate proteins. Interacts with the ribosome. Interacts with SecDF, and other proteins may be involved. Interacts with SecA.

Its subcellular location is the cell inner membrane. It is found in the cellular thylakoid membrane. In terms of biological role, essential subunit of the Sec protein translocation channel SecYEG. Clamps together the 2 halves of SecY. May contact the channel plug during translocation. The polypeptide is Protein translocase subunit SecE (Synechocystis sp. (strain ATCC 27184 / PCC 6803 / Kazusa)).